Reading from the N-terminus, the 134-residue chain is Small ribosomal subunit protein uS11 (134 aa).

The protein belongs to the universal ribosomal protein uS11 family. In terms of assembly, part of the 30S ribosomal subunit. Interacts with proteins S7 and S18. Binds to IF-3.

Functionally, located on the platform of the 30S subunit, it bridges several disparate RNA helices of the 16S rRNA. Forms part of the Shine-Dalgarno cleft in the 70S ribosome. The protein is Small ribosomal subunit protein uS11 of Albidiferax ferrireducens (strain ATCC BAA-621 / DSM 15236 / T118) (Rhodoferax ferrireducens).